The primary structure comprises 295 residues: 4-hydroxy-tetrahydrodipicolinate synthase (295 aa).

Thr-48 provides a ligand contact to pyruvate. The Proton donor/acceptor role is filled by Tyr-136. The Schiff-base intermediate with substrate role is filled by Lys-164. Ile-206 is a binding site for pyruvate.

Belongs to the DapA family. As to quaternary structure, homotetramer; dimer of dimers.

Its subcellular location is the cytoplasm. The enzyme catalyses L-aspartate 4-semialdehyde + pyruvate = (2S,4S)-4-hydroxy-2,3,4,5-tetrahydrodipicolinate + H2O + H(+). It participates in amino-acid biosynthesis; L-lysine biosynthesis via DAP pathway; (S)-tetrahydrodipicolinate from L-aspartate: step 3/4. Catalyzes the condensation of (S)-aspartate-beta-semialdehyde [(S)-ASA] and pyruvate to 4-hydroxy-tetrahydrodipicolinate (HTPA). The chain is 4-hydroxy-tetrahydrodipicolinate synthase from Actinobacillus pleuropneumoniae serotype 7 (strain AP76).